Here is a 685-residue protein sequence, read N- to C-terminus: MIGKILGNRYELLQCVGEGGMSFVYKARCRKLNRFVAVKILKDEFKNNEEIVRRFKKEATAIANLSNPNVVNVLDVGTQDDINYIVMEYVEGKTLKDIIKEKGALPYEVAISIGIKVAKALECAHKSGIIHRDVKPQNILVTEEGVVKVTDFGIAKSMDSSTIAHTNSVMGSAHYFSPEQAKGTYTDYRTDLYSLGIVLYEMVTGVVPFNGDSPVTVAVKHIQEKAIPPKNINQNIPNSLNDLIMKAMEKDPVNRYQTAKEIIGDLEKIKKDPNVTISSKSAEDEDQFTRVMSPVVVPNTETNNSEPDEDDEDDDEYYEDDEDEDEEENNIQTKPQKAINKNKKKSPILIIIATILVVALGITLGFLGMKKFMEGGKDVKIPNVVGEKVEDAKSKLEGLGLKVLEVTEESDQEKGIVLKVDPNVDSTVKTGSEVKLTVSGGEGQIKVPNFAEMNLDSVKRTLKSLGLELGSVDEEYSDSVPRGEVISQSPNANESVDKGSKVNVTISKGKEIKSETINIPDVSGKSVEEAKSILANAGVGVNPVKGEAAKSEGEAGKVYSQSQSGSLTIKQGEKVTITINYYGDYVKPEKPKHNAGELVGMTGAQAKAWASKNKINVSGITSDTAKVKSVSNSGEVEEGGSVSVTMEEEKKPEQPTQPNQPTQPTQPNQQAQPEQPKQPEQSGNN.

Positions 10–275 (YELLQCVGEG…LEKIKKDPNV (266 aa)) constitute a Protein kinase domain. Residues 16–24 (VGEGGMSFV) and K39 each bind ATP. Catalysis depends on E143, which acts as the Proton acceptor. The segment at 277–339 (ISSKSAEDED…NIQTKPQKAI (63 aa)) is disordered. A compositionally biased stretch (acidic residues) spans 306 to 329 (EPDEDDEDDDEYYEDDEDEDEEEN). PASTA domains lie at 376 to 440 (GKDV…TVSG), 441 to 508 (GEGQ…TISK), 513 to 581 (KSET…TINY), and 589 to 648 (EKPK…TMEE). A disordered region spans residues 480 to 500 (VPRGEVISQSPNANESVDKGS). Positions 623 to 685 (DTAKVKSVSN…PKQPEQSGNN (63 aa)) are disordered. 2 stretches are compositionally biased toward low complexity: residues 627-645 (VKSV…VSVT) and 654-685 (QPTQ…SGNN).

This sequence belongs to the protein kinase superfamily. Ser/Thr protein kinase family.

It catalyses the reaction L-seryl-[protein] + ATP = O-phospho-L-seryl-[protein] + ADP + H(+). It carries out the reaction L-threonyl-[protein] + ATP = O-phospho-L-threonyl-[protein] + ADP + H(+). This chain is Probable serine/threonine-protein kinase CPE1738, found in Clostridium perfringens (strain 13 / Type A).